A 346-amino-acid chain; its full sequence is Prepilin peptidase EppA (346 aa).

10 helical membrane-spanning segments follow: residues 1–21 (MFGF…LILT), 31–51 (IIPH…GYYF), 56–76 (AITS…GMGG), 77–97 (GDVK…IYFV), 101–121 (ISIL…TKIL), 128–148 (IIPS…ITEI), 149–169 (YSIG…IFIS), 182–202 (LGYI…AYFV), 206–226 (VLIS…VIYA), and 321–341 (PFVP…MGVI).

The protein belongs to the peptidase A24 family.

The protein localises to the cell membrane. In terms of biological role, peptidase that processes the N-terminus of prepilins. Specifically cleaves proteins with a class III (type IV pilin-like) signal sequence, such as the major structural pilin EpdE and the minor pilins EpdA, EpdC and EpdD. Is not able to cleave the preflagellin subunit FlaB2. This Methanococcus maripaludis (strain DSM 14266 / JCM 13030 / NBRC 101832 / S2 / LL) protein is Prepilin peptidase EppA.